Here is a 179-residue protein sequence, read N- to C-terminus: uncharacterized protein (179 aa).

Residues 27-54 (TAKKSRVQAREARAAVEENKKAQLERDK) form a disordered region.

This is an uncharacterized protein from Escherichia coli (strain K12).